The chain runs to 249 residues: Small ribosomal subunit protein uS5 (249 aa).

Residues 1–14 (MSAEAPKRQFGDRR) show a composition bias toward basic and acidic residues. Positions 1 to 29 (MSAEAPKRQFGDRRRGGRRGGRRDGEEKG) are disordered. An S5 DRBM domain is found at 71–134 (LKDDVMKIRS…VIAKLSIIPI (64 aa)).

It belongs to the universal ribosomal protein uS5 family. In terms of assembly, component of the small ribosomal subunit. Mature ribosomes consist of a small (40S) and a large (60S) subunit. The 40S subunit contains about 32 different proteins and 1 molecule of RNA (18S). The 60S subunit contains 45 different proteins and 3 molecules of RNA (25S, 5.8S and 5S).

The protein resides in the cytoplasm. Functionally, component of the ribosome, a large ribonucleoprotein complex responsible for the synthesis of proteins in the cell. The small ribosomal subunit (SSU) binds messenger RNAs (mRNAs) and translates the encoded message by selecting cognate aminoacyl-transfer RNA (tRNA) molecules. The large subunit (LSU) contains the ribosomal catalytic site termed the peptidyl transferase center (PTC), which catalyzes the formation of peptide bonds, thereby polymerizing the amino acids delivered by tRNAs into a polypeptide chain. The nascent polypeptides leave the ribosome through a tunnel in the LSU and interact with protein factors that function in enzymatic processing, targeting, and the membrane insertion of nascent chains at the exit of the ribosomal tunnel. RPS2 is important for the assembly and function of the 40S ribosomal subunitand is nvolved in nucleolar processing of pre-18S ribosomal RNA and ribosome assembly. The polypeptide is Small ribosomal subunit protein uS5 (RPS21) (Candida albicans (strain SC5314 / ATCC MYA-2876) (Yeast)).